The chain runs to 351 residues: Histidinol-phosphate aminotransferase (351 aa).

Lys-213 bears the N6-(pyridoxal phosphate)lysine mark.

Belongs to the class-II pyridoxal-phosphate-dependent aminotransferase family. Histidinol-phosphate aminotransferase subfamily. In terms of assembly, homodimer. Pyridoxal 5'-phosphate is required as a cofactor.

It catalyses the reaction L-histidinol phosphate + 2-oxoglutarate = 3-(imidazol-4-yl)-2-oxopropyl phosphate + L-glutamate. The catalysed reaction is L-histidine + 2-oxoglutarate = 3-(imidazol-5-yl)pyruvate + L-glutamate. Its pathway is amino-acid biosynthesis; L-histidine biosynthesis; L-histidine from 5-phospho-alpha-D-ribose 1-diphosphate: step 7/9. In Caldanaerobacter subterraneus subsp. tengcongensis (strain DSM 15242 / JCM 11007 / NBRC 100824 / MB4) (Thermoanaerobacter tengcongensis), this protein is Histidinol-phosphate aminotransferase.